The sequence spans 135 residues: C-type lectin LmsL (135 aa).

4 disulfides stabilise this stretch: cysteine 3–cysteine 14, cysteine 31–cysteine 131, cysteine 38–cysteine 133, and cysteine 106–cysteine 123. In terms of domain architecture, C-type lectin spans 10–132 (MNGLCYKIFD…CESKNAFLCQ (123 aa)). Glutamine 96, aspartate 98, glutamate 104, asparagine 119, and aspartate 120 together coordinate Ca(2+). Residues 96–98 (QPD) carry the Galactose-binding motif.

It belongs to the true venom lectin family. In terms of assembly, homodimer; disulfide-linked. As to expression, expressed by the venom gland.

Its subcellular location is the secreted. Galactose-binding protein which recognizes specific carbohydrate structures and agglutinates a variety of animal cells by binding to cell-surface glycoproteins and glycolipids. Is a calcium-dependent lectin. Shows high hemagglutinating activity, that is inhibited by lactose, galactose and inositol. This chain is C-type lectin LmsL, found in Lachesis stenophrys (Central American bushmaster).